The following is a 159-amino-acid chain: Large ribosomal subunit protein uL23m (159 aa).

Belongs to the universal ribosomal protein uL23 family. Component of the mitochondrial ribosome large subunit (39S) which comprises a 16S rRNA and about 50 distinct proteins.

The protein resides in the mitochondrion. In Caenorhabditis elegans, this protein is Large ribosomal subunit protein uL23m (mrpl-23).